A 307-amino-acid polypeptide reads, in one-letter code: UAP56-interacting factor (307 aa).

The segment covering 1-25 has biased composition (low complexity); the sequence is MSGFGAAALLSGSSAAAGTRSGSSD. Disordered stretches follow at residues 1–28 and 41–85; these read MSGF…DSLE and NKKE…KNHL. A UAP56-binding motif motif is present at residues 26 to 44; that stretch reads SLEKIDMSLDDIIKLNKKE. Polar residues predominate over residues 57–78; it reads LQQNRTQQFRTPGSKWGIQQQK.

This sequence belongs to the UIF family. As to expression, widely expressed.

It is found in the nucleus. It localises to the nucleoplasm. The protein localises to the nucleus speckle. Functionally, required for mRNA export from the nucleus to the cytoplasm. Acts as an adapter that uses the DDX39B/UAP56-NFX1 pathway to ensure efficient mRNA export and delivering to the nuclear pore. This Gallus gallus (Chicken) protein is UAP56-interacting factor (FYTTD1).